The chain runs to 118 residues: Large ribosomal subunit protein uL18 (118 aa).

Belongs to the universal ribosomal protein uL18 family. As to quaternary structure, part of the 50S ribosomal subunit; part of the 5S rRNA/L5/L18/L25 subcomplex. Contacts the 5S and 23S rRNAs.

Functionally, this is one of the proteins that bind and probably mediate the attachment of the 5S RNA into the large ribosomal subunit, where it forms part of the central protuberance. This Sulfurimonas denitrificans (strain ATCC 33889 / DSM 1251) (Thiomicrospira denitrificans (strain ATCC 33889 / DSM 1251)) protein is Large ribosomal subunit protein uL18.